The sequence spans 63 residues: Hyphancin-3G (63 aa).

The N-terminal stretch at 1–22 is a signal peptide; sequence MNFSRILFFMFACFVALASVSA. The propeptide at 23–26 is removed by a dipeptidylpeptidase; the sequence is VPEP. Leu61 is subject to Leucine amide.

The protein belongs to the cecropin family.

It is found in the secreted. Functionally, has antibacterial activity. The sequence is that of Hyphancin-3G from Hyphantria cunea (Fall webworm moth).